The primary structure comprises 130 residues: Small ribosomal subunit protein uS9 (130 aa).

This sequence belongs to the universal ribosomal protein uS9 family.

This Clostridium perfringens (strain ATCC 13124 / DSM 756 / JCM 1290 / NCIMB 6125 / NCTC 8237 / Type A) protein is Small ribosomal subunit protein uS9.